The primary structure comprises 372 residues: UDP-N-acetylglucosamine--N-acetylmuramyl-(pentapeptide) pyrophosphoryl-undecaprenol N-acetylglucosamine transferase (372 aa).

Residues 15–17, asparagine 126, arginine 169, serine 197, and glutamine 299 each bind UDP-N-acetyl-alpha-D-glucosamine; that span reads TGG.

Belongs to the glycosyltransferase 28 family. MurG subfamily.

The protein resides in the cell inner membrane. The enzyme catalyses di-trans,octa-cis-undecaprenyl diphospho-N-acetyl-alpha-D-muramoyl-L-alanyl-D-glutamyl-meso-2,6-diaminopimeloyl-D-alanyl-D-alanine + UDP-N-acetyl-alpha-D-glucosamine = di-trans,octa-cis-undecaprenyl diphospho-[N-acetyl-alpha-D-glucosaminyl-(1-&gt;4)]-N-acetyl-alpha-D-muramoyl-L-alanyl-D-glutamyl-meso-2,6-diaminopimeloyl-D-alanyl-D-alanine + UDP + H(+). It participates in cell wall biogenesis; peptidoglycan biosynthesis. Cell wall formation. Catalyzes the transfer of a GlcNAc subunit on undecaprenyl-pyrophosphoryl-MurNAc-pentapeptide (lipid intermediate I) to form undecaprenyl-pyrophosphoryl-MurNAc-(pentapeptide)GlcNAc (lipid intermediate II). In Methylobacterium sp. (strain 4-46), this protein is UDP-N-acetylglucosamine--N-acetylmuramyl-(pentapeptide) pyrophosphoryl-undecaprenol N-acetylglucosamine transferase.